Here is a 220-residue protein sequence, read N- to C-terminus: Deoxyribose-phosphate aldolase (220 aa).

D89 serves as the catalytic Proton donor/acceptor. Residue K151 is the Schiff-base intermediate with acetaldehyde of the active site. K180 serves as the catalytic Proton donor/acceptor.

Belongs to the DeoC/FbaB aldolase family. DeoC type 1 subfamily.

The protein resides in the cytoplasm. The enzyme catalyses 2-deoxy-D-ribose 5-phosphate = D-glyceraldehyde 3-phosphate + acetaldehyde. It participates in carbohydrate degradation; 2-deoxy-D-ribose 1-phosphate degradation; D-glyceraldehyde 3-phosphate and acetaldehyde from 2-deoxy-alpha-D-ribose 1-phosphate: step 2/2. Catalyzes a reversible aldol reaction between acetaldehyde and D-glyceraldehyde 3-phosphate to generate 2-deoxy-D-ribose 5-phosphate. The protein is Deoxyribose-phosphate aldolase of Streptococcus equi subsp. equi (strain 4047).